Consider the following 337-residue polypeptide: Trace amine-associated receptor 5 (337 aa).

Residues 1-38 (MRAVLLPGSGEQPTAFCYQVNGSCPRTVHPLAIQVVIY) lie on the Extracellular side of the membrane. N-linked (GlcNAc...) asparagine glycosylation is present at Asn-21. 2 cysteine pairs are disulfide-bonded: Cys-24/Cys-188 and Cys-99/Cys-192. A helical transmembrane segment spans residues 39 to 59 (LACAVGVLITVLGNLFVVFAV). The Cytoplasmic portion of the chain corresponds to 60-70 (SYFKVLHTPTN). Residues 71-91 (FLLLSLALADMLLGLLVLPLS) form a helical membrane-spanning segment. Residues 92–109 (TVRSVESCWFFGDFLCRL) lie on the Extracellular side of the membrane. Residues 110–130 (HTYLDTLFCLTSIFHLCFISI) form a helical membrane-spanning segment. Topologically, residues 131–154 (DRHCAICDPLLYPSKFTVRTALRY) are cytoplasmic. A helical membrane pass occupies residues 155 to 175 (IVAGWGIPAAYTAFFLYTDVV). The extracellular Loop 2 (ECL2) stretch occupies residues 176–189 (ERALSQWLEEMPCV). Residues 176–204 (ERALSQWLEEMPCVGSCQLLFNKFWGWLN) lie on the Extracellular side of the membrane. Residues 205–225 (FPAFFVPCLIMISLYLKIFVV) form a helical membrane-spanning segment. Residues 226 to 253 (ATRQAQQIRTLSQSLAGAVKRERKAAKT) are Cytoplasmic-facing. Residues 254-274 (LGIAVGIYLVCWLPFTVDTLV) traverse the membrane as a helical segment. Residues 275–284 (DSLLNFITPP) are Extracellular-facing. The helical transmembrane segment at 285–307 (LVFDIFIWFAYFNSACNPIIYVF) threads the bilayer. Residues 308–337 (SYRWFRKALKLLLSREIFSPRTPTVDLYHD) are Cytoplasmic-facing.

It belongs to the G-protein coupled receptor 1 family. Specifically expressed in neurons of the olfactory epithelium, to discrete glomeruli predominantly localized to a confined bulb region. Present in the dorsal area of the main olfactory epithelium. Also present in the limbic brain areas receiving projection from the olfactory system and involved in the regulation of emotions. Also expressed in some brain regions outside the olfactory epithelium, such as the hippocampus, cerebellum, cortex, raphe nuclei, hypothalamus, and habenula.

The protein localises to the cell membrane. With respect to regulation, inhibited by 1-[(5,5- diphenyloxolan-2-yl)methyl]-4-(2-methoxyphenyl)piperazine and N-[(2,2-diphenyl-1,3-dioxolan-4-yl)methyl]-2-(2- methoxyphenoxy)ethan-1-amine small molecules. Its function is as follows. Olfactory receptor specific for trimethylamine, a trace amine enriched in the urine of male mice, playing a role in social behavior. Also activated by N-methylpiperidine. Trimethylamine is present at high concentration in the urine of male mice after puberty and acts as an attractant. Trimethylamine-binding causes a conformation change that triggers signaling via G(s)-class of G alpha proteins (GNAL or GNAS). Also required to provide olfactory input into limbic brain areas to regulate emotional behaviors likely via modulation of the serotonin system. The protein is Trace amine-associated receptor 5 of Mus musculus (Mouse).